The following is a 380-amino-acid chain: Anhydro-N-acetylmuramic acid kinase (380 aa).

Residue 9–16 (GTSVDGID) coordinates ATP.

The protein belongs to the anhydro-N-acetylmuramic acid kinase family.

It catalyses the reaction 1,6-anhydro-N-acetyl-beta-muramate + ATP + H2O = N-acetyl-D-muramate 6-phosphate + ADP + H(+). The protein operates within amino-sugar metabolism; 1,6-anhydro-N-acetylmuramate degradation. Its pathway is cell wall biogenesis; peptidoglycan recycling. Functionally, catalyzes the specific phosphorylation of 1,6-anhydro-N-acetylmuramic acid (anhMurNAc) with the simultaneous cleavage of the 1,6-anhydro ring, generating MurNAc-6-P. Is required for the utilization of anhMurNAc either imported from the medium or derived from its own cell wall murein, and thus plays a role in cell wall recycling. This is Anhydro-N-acetylmuramic acid kinase from Cyanothece sp. (strain PCC 7425 / ATCC 29141).